The chain runs to 65 residues: Large ribosomal subunit protein uL29 (65 aa).

It belongs to the universal ribosomal protein uL29 family.

The protein is Large ribosomal subunit protein uL29 of Parabacteroides distasonis (strain ATCC 8503 / DSM 20701 / CIP 104284 / JCM 5825 / NCTC 11152).